We begin with the raw amino-acid sequence, 168 residues long: Protein yop-1 (168 aa).

Over methionine 1–proline 35 the chain is Cytoplasmic. Residues lysine 36–leucine 55 form a helical membrane-spanning segment. Residue glycine 56 is a topological domain, lumenal. The helical transmembrane segment at glycine 57 to alanine 76 threads the bilayer. Over leucine 77–threonine 86 the chain is Cytoplasmic. Residues glutamine 87–serine 103 form a helical membrane-spanning segment. The Lumenal segment spans residues leucine 104–isoleucine 105. A helical transmembrane segment spans residues serine 106 to tryptophan 124. Topologically, residues leucine 125 to aspartate 168 are cytoplasmic.

Belongs to the DP1 family. As to quaternary structure, oligomer.

The protein resides in the endoplasmic reticulum membrane. It localises to the golgi apparatus membrane. Functionally, required to generate and maintain the structure of the tubular endoplasmic reticulum network and the vacuole. Induces high curvature in membranes and causes membrane tubule formation. Involved in membrane/vesicle trafficking. The sequence is that of Protein yop-1 (yop-1) from Neurospora crassa (strain ATCC 24698 / 74-OR23-1A / CBS 708.71 / DSM 1257 / FGSC 987).